The sequence spans 119 residues: Large ribosomal subunit protein bL19 (119 aa).

The protein belongs to the bacterial ribosomal protein bL19 family.

In terms of biological role, this protein is located at the 30S-50S ribosomal subunit interface and may play a role in the structure and function of the aminoacyl-tRNA binding site. In Petrotoga mobilis (strain DSM 10674 / SJ95), this protein is Large ribosomal subunit protein bL19.